Consider the following 679-residue polypeptide: Glycine--tRNA ligase beta subunit (679 aa).

Belongs to the class-II aminoacyl-tRNA synthetase family. In terms of assembly, tetramer of two alpha and two beta subunits.

The protein localises to the cytoplasm. It carries out the reaction tRNA(Gly) + glycine + ATP = glycyl-tRNA(Gly) + AMP + diphosphate. This Streptococcus gordonii (strain Challis / ATCC 35105 / BCRC 15272 / CH1 / DL1 / V288) protein is Glycine--tRNA ligase beta subunit.